The following is a 115-amino-acid chain: Putative septation protein SpoVG (115 aa).

The tract at residues 88 to 115 (PGTIATSEVSSQLEESDSDKTLSEDLKA) is disordered. Polar residues predominate over residues 91 to 100 (IATSEVSSQL). Residues 105 to 115 (SDKTLSEDLKA) show a composition bias toward basic and acidic residues.

Belongs to the SpoVG family.

Functionally, could be involved in septation. In Macrococcus caseolyticus (strain JCSC5402) (Macrococcoides caseolyticum), this protein is Putative septation protein SpoVG.